Consider the following 408-residue polypeptide: Dicamba O-demethylase 1, ferredoxin reductase component (408 aa).

Residues Gly14, Lys49, Val82, Arg130, Asp279, and Val298 each coordinate FAD.

The protein belongs to the FAD-dependent oxidoreductase family. Monomer. The dicamba O-demethylase multicomponent enzyme system is composed of an oxygenase component (DdmC) and an electron transfer component formed by a ferredoxin reductase (DdmA1) and a ferredoxin (DdmB). In vitro, dicamba O-demethylase assays in which DdmA2 is substituted for DdmA1 demonstrate that the two enzymes possess nearly identical activities. FAD is required as a cofactor.

It catalyses the reaction 2 reduced [2Fe-2S]-[ferredoxin] + NAD(+) + H(+) = 2 oxidized [2Fe-2S]-[ferredoxin] + NADH. Functionally, component of the dicamba O-demethylase multicomponent enzyme system involved in the degradation of the herbicide dicamba. In vitro, catalyzes the transfers of electrons from ferredoxin (DdmB) to NADH. Both NADH and NADPH support enzyme activity, with NADH being markedly more effective than NADPH. The protein is Dicamba O-demethylase 1, ferredoxin reductase component of Stenotrophomonas maltophilia (Pseudomonas maltophilia).